The sequence spans 473 residues: UDP-N-acetylmuramate--L-alanine ligase (473 aa).

Position 112–118 (112–118) interacts with ATP; it reads GTHGKTT.

Belongs to the MurCDEF family.

It localises to the cytoplasm. It catalyses the reaction UDP-N-acetyl-alpha-D-muramate + L-alanine + ATP = UDP-N-acetyl-alpha-D-muramoyl-L-alanine + ADP + phosphate + H(+). It participates in cell wall biogenesis; peptidoglycan biosynthesis. Its function is as follows. Cell wall formation. This chain is UDP-N-acetylmuramate--L-alanine ligase, found in Nitrosomonas europaea (strain ATCC 19718 / CIP 103999 / KCTC 2705 / NBRC 14298).